Reading from the N-terminus, the 897-residue chain is Major intrinsically disordered Notch2-binding receptor 1 (897 aa).

Over 1–872 (MDAMPEYSLF…AEFRRAKACK (872 aa)) the chain is Cytoplasmic. Disordered stretches follow at residues 405-433 (AKDK…SVAC), 450-502 (SINC…EDSE), and 688-766 (TRRS…PPKD). Composition is skewed to polar residues over residues 411 to 423 (ASPS…SNGS) and 452 to 471 (NCPS…GTQT). Basic and acidic residues predominate over residues 472–498 (EQHESRKVKDYPSQNKFKERPPFKHSE). Residues 697–724 (EENSATESKVASITNSPRDWRTVSYSSH) show a composition bias toward polar residues. A compositionally biased stretch (basic and acidic residues) spans 725–756 (NGEEGKERDRHSEGKERHRKSREAERQYEAHQ). A helical transmembrane segment spans residues 873-893 (IGALIFAAACTVILVIVVPIC). Topologically, residues 894–897 (TMKS) are extracellular.

This sequence belongs to the MINAR family.

It is found in the cell membrane. Its function is as follows. Intrinsically disordered protein which may negatively regulate mTOR signaling pathway by stabilizing the mTOR complex component DEPTOR. Negatively regulates angiogenesis. Negatively regulates cell growth. May play a role in neuronal development. The polypeptide is Major intrinsically disordered Notch2-binding receptor 1 (minar1) (Danio rerio (Zebrafish)).